The following is an 809-amino-acid chain: E3 ubiquitin-protein ligase RSP5 (809 aa).

One can recognise a C2 domain in the interval 1–105; sequence MPSSISVKLV…GHLDEDTATS (105 aa). 3 disordered regions span residues 99–122, 139–240, and 257–298; these read DEDT…KKSN, PSSS…RRTD, and WKRP…DNSS. Positions 108–122 are enriched in basic and acidic residues; sequence RPREETITRDLKKSN. Residues 139 to 148 show a composition bias toward polar residues; the sequence is PSSSPHSQAP. Residues 149-183 show a composition bias toward low complexity; sequence SGHTASSSTNTSSTTRTNGHSTSSTRNHSTSHPSR. The span at 184–196 shows a compositional bias: polar residues; it reads GTAQAVESTLQSG. The span at 197 to 219 shows a compositional bias: low complexity; it reads TTAATNTATTSHRSTNSTSSATR. 3 WW domains span residues 229 to 262, 331 to 364, and 387 to 420; these read GRLP…RPTL, GELP…DPRR, and GPLP…DPRL. Lys-258 is covalently cross-linked (Glycyl lysine isopeptide (Lys-Gly) (interchain with G-Cter in ubiquitin)). An HECT domain is found at 705–809; the sequence is YRGYQESDEV…VEETIGFGQE (105 aa). The active-site Glycyl thioester intermediate is Cys-777.

This sequence belongs to the RSP5/NEDD4 family. As to quaternary structure, component of the RSP5-BUL1/2 ubiquitin ligase complex composed of at least RSP5 and BUL1 or BUL2. Component of the RSP5-UBA1-UBC5 ubiquitin ligase complex composed of E3 RSP5, E1 UBA1 and E2 UBC5. Also forms a ternary complex with RUP1 and UBP2. Interacts (via WW domains) with LSB1. Interacts (via WW domains) with PIN3/LSB2. Interacts (via WW domains) with RCR1 (via PY motifs). Interacts with UBP2; the interaction is direct. Interacts with HSE1. Interacts with LAS17. Interacts with ROG3. Interacts with ROD1. Interacts with RVS167. Interacts with ubiquitin. In terms of processing, the ubiquitination appears to be the result of an intramolecular transfer of ubiquitin.

It is found in the cytoplasm. Its subcellular location is the nucleus. The protein resides in the cytoskeleton. It localises to the actin patch. It carries out the reaction S-ubiquitinyl-[E2 ubiquitin-conjugating enzyme]-L-cysteine + [acceptor protein]-L-lysine = [E2 ubiquitin-conjugating enzyme]-L-cysteine + N(6)-ubiquitinyl-[acceptor protein]-L-lysine.. Its pathway is protein modification; protein ubiquitination. Functionally, E3 ubiquitin-protein ligase which accepts ubiquitin from an E2 ubiquitin-conjugating enzyme in the form of a thioester and then directly transfers the ubiquitin to targeted substrates. Component of a RSP5 ubiquitin ligase complex which specifies polyubiquitination and intracellular trafficking of the general amino acid permease GAP1 as well as other cell surface proteins like GAP1, FUR4, MAL61, PMA1 and STE2. The RSP5-BUL1/2 complex is also necessary for the heat-shock element (HSE)-mediated gene expression, nitrogen starvation GLN3-dependent transcription, pressure-induced differential regulation of the two tryptophan permeases TAT1 and TAT2 and sorting efficiency into multivesicular bodies. The RSP5-UBA1-UBC5 ubiquitin ligase complex ubiquitinates RPO21 forming 'Lys-63'-linked polyubiquitin chains. Plays a role in tolerance to o-dinitrobenzene. Involved in actin cytoskeleton organization and dynamics. Ubiquitinates the LAS17-binding proteins LSB1 and PIN3/LSB2 without directing them for degradation and affects LAS17 levels in a SLA1-dependent and LSB1/2-independent manner. Also involved in the degradation of non-functional 18S rRNAs in response to stalled ribosomes by mediating polyubiquitination of monoubiquitinated RPS3/uS3: mediates formation of 'Lys-63'-linked polyubiquitin chains on monoubiquitined RPS3/uS3, promoting the degradation of non-functional 18S rRNAs. The chain is E3 ubiquitin-protein ligase RSP5 (RSP5) from Saccharomyces cerevisiae (strain ATCC 204508 / S288c) (Baker's yeast).